The following is a 331-amino-acid chain: Lipoate-protein ligase LplJ (331 aa).

The region spanning 27 to 214 (DPEQQYLLFY…HIFNTNDVGN (188 aa)) is the BPL/LPL catalytic domain. ATP contacts are provided by residues R69, 74 to 77 (GAVY), and K131. Residue K131 coordinates (R)-lipoate.

It belongs to the LplA family.

The protein localises to the cytoplasm. It carries out the reaction L-lysyl-[lipoyl-carrier protein] + (R)-lipoate + ATP = N(6)-[(R)-lipoyl]-L-lysyl-[lipoyl-carrier protein] + AMP + diphosphate + H(+). Its pathway is protein modification; protein lipoylation via exogenous pathway; protein N(6)-(lipoyl)lysine from lipoate: step 1/2. The protein operates within protein modification; protein lipoylation via exogenous pathway; protein N(6)-(lipoyl)lysine from lipoate: step 2/2. Functionally, catalyzes both the ATP-dependent activation of exogenously supplied lipoate to lipoyl-AMP and the transfer of the activated lipoyl onto the lipoyl domains of lipoate-dependent enzymes. Is also able to use octanoate as substrate. The chain is Lipoate-protein ligase LplJ (lplJ) from Bacillus subtilis (strain 168).